The primary structure comprises 108 residues: QILLTQSPAIMSASPGQKVTMTCSASSSVSYMYWYQQKPGSSPRLLIYDTSNLASGVPVRFSGSGSATSYSLTITRMQAEDAATYYCQQWSSYPPMLTFGAGTKLELK.

Residues glutamine 1–cysteine 23 are framework-1. Cysteine 23 and cysteine 87 form a disulfide bridge. The tract at residues serine 24 to tyrosine 33 is complementarity-determining-1. Residues tryptophan 34–tyrosine 48 form a framework-2 region. Residues aspartate 49–serine 55 form a complementarity-determining-2 region. The tract at residues glycine 56–cysteine 87 is framework-3. A complementarity-determining-3 region spans residues glutamine 88–threonine 98. A framework-4 region spans residues phenylalanine 99 to lysine 108.

This is Ig kappa chain V-VI region NQ2-6.1 from Mus musculus (Mouse).